An 825-amino-acid polypeptide reads, in one-letter code: Leucine-rich repeat and guanylate kinase domain-containing protein (825 aa).

Residues 73–96 (DSDGDEDQGEGEAGSEESSESEML) form a disordered region. LRR repeat units follow at residues 129–149 (YLNL…CGYV), 150–171 (HLQK…SCMP), 172–193 (YLLE…KPPK), 194–215 (NLKK…SAYH), 216–237 (ALTK…EMCN), 238–259 (NLIH…NKLP), 260–280 (IKIL…EDLK), 281–302 (ALQN…ENHD), and 303–324 (LLEV…EYIK). The region spanning 337–375 (NPIQEKSEYWFFVIFMLLRLTELDQKKIKVEEKVSAVNK) is the LRRCT domain. Residues 414–597 (YPMLILAGPE…AYQKLSQLIR (184 aa)) form the Guanylate kinase-like domain. 421-428 (GPEACGKR) is a binding site for ATP. The segment at 760 to 825 (PEGSISSHLG…TLPPIPQGRR (66 aa)) is disordered. Polar residues predominate over residues 763-774 (SISSHLGSGASD). Residues 816–825 (TLPPIPQGRR) show a composition bias toward pro residues.

As to quaternary structure, interacts (via guanylate kinase-like domain) with RIMBP3 (via coiled-coil region). Interacts (via guanylate kinase-like domain) with HOOK2. Interacts (via LRRCT domain) with KLC3. Interacts with HOOK1 and HOOK3.

Its subcellular location is the cytoplasmic vesicle. The protein localises to the secretory vesicle. It is found in the acrosome. The protein resides in the cytoplasm. It localises to the cytoskeleton. Its subcellular location is the cilium basal body. Functionally, involved in multiple aspects of sperm assembly including acrosome attachment, shaping of the sperm head and in the early aspects of axoneme development. Not essential for primary cilium biogenesis. This Homo sapiens (Human) protein is Leucine-rich repeat and guanylate kinase domain-containing protein (LRGUK).